The primary structure comprises 939 residues: Intimin (939 aa).

The signal sequence occupies residues 1–41; it reads MITHGFYARTRHKHKLKKTFIMLSAGLGLFFYVNQNSFANG. Positions 40-153 are peptidoglycan-binding; sequence NGENYFKLGS…KLTKMSPDVT (114 aa). A sufficient for homodimerization region spans residues 40-153; it reads NGENYFKLGS…KLTKMSPDVT (114 aa). Residues 40 to 212 are required for periplasmic localization; the sequence is NGENYFKLGS…LQAWLQHYGT (173 aa). A LysM domain is found at 63–112; that stretch reads LFYTLKTGETVADLSKSQDINLSTIWSLNKHLYSSESEMMKAAPGQQIIL. Positions 189–430 are inverse autotransporter; the sequence is DTALGIAGNQ…PQYVNELRTL (242 aa). A signature sequence for beta-barrel assembly machinery (BAM), which recognizes the unfolded beta-barrel in the periplasm region spans residues 402 to 411; it reads LYSMQFRYQF. 2 Big-1 domains span residues 560–653 and 660–751; these read VTDF…VIFV and ITEI…VEFF. Positions 750 to 939 are required and sufficient for interaction with intimin receptor Tir; sequence FFTTLTIDDG…ESNAYATCVK (190 aa). The tract at residues 842–939 is C-type lectin domain; the sequence is LIVPNMSKRV…ESNAYATCVK (98 aa). Residues 842–939 are intimin receptor Tir-binding; sequence LIVPNMSKRV…ESNAYATCVK (98 aa). A disulfide bridge links Cys860 with Cys937.

It belongs to the intimin/invasin family. As to quaternary structure, homodimer. Interacts with Tir.

It localises to the cell outer membrane. In terms of biological role, an inverse autotransporter. Adhesin, which mediates attachment to the human intestine epithelial cells. Necessary for the production of attaching and effacing lesions on infected human tissue culture cells. Anchored to the outer membrane by binding to peptidoglycan (PGN) via its periplasmic domain, thus helping in receptor interactions during host invasion. PGN-binding may also aid in resisting mechanical and chemical stress during transit of the bacterium through the gastrointestinal tract of the host. Periplasmic domain binds purified E.coli PGN sacculi under acidic conditions in vitro and in vivo, but does not bind to chitin. Periplasmic domain binds PGN sacculi with an apparent dissociation constant (Kd) of 0.8 uM. No binding to PGN in vitro at normal physiological pH 7.4. This Escherichia coli O127:H6 (strain E2348/69 / EPEC) protein is Intimin.